A 404-amino-acid polypeptide reads, in one-letter code: Deoxyguanosinetriphosphate triphosphohydrolase-like protein (404 aa).

Positions 69 to 217 (RLTHSLEVAQ…AGIADDIAYD (149 aa)) constitute an HD domain.

The protein belongs to the dGTPase family. Type 2 subfamily.

The chain is Deoxyguanosinetriphosphate triphosphohydrolase-like protein from Rhodopseudomonas palustris (strain BisB18).